Consider the following 600-residue polypeptide: CDK5RAP1-like protein (600 aa).

Residues Leu-45 to Arg-66 form a disordered region. Residues Gly-93–Tyr-222 enclose the MTTase N-terminal domain. The [4Fe-4S] cluster site is built by Cys-102, Cys-139, Cys-185, Cys-260, Cys-264, and Cys-267. The Radical SAM core domain occupies Ser-246–Lys-501. Positions Asp-504–Ala-580 constitute a TRAM domain.

This sequence belongs to the methylthiotransferase family. MiaB subfamily. It depends on [4Fe-4S] cluster as a cofactor.

In terms of biological role, potential regulator of CDK5 activity. The protein is CDK5RAP1-like protein of Oryza sativa subsp. japonica (Rice).